The chain runs to 190 residues: Signal peptidase I W (190 aa).

The chain crosses the membrane as a helical span at residues 4-24 (ISNILYVIIFTLIIVLTLVVI). S45 is a catalytic residue. Residues 143 to 163 (PIGTAVLLIVPGVMLLVYAFV) form a helical membrane-spanning segment.

The protein belongs to the peptidase S26B family.

The protein localises to the cell membrane. The catalysed reaction is Cleavage of hydrophobic, N-terminal signal or leader sequences from secreted and periplasmic proteins.. Required for the cleavage of the signal sequence of TasA and TapA, which are involved in biofilm formation. The protein is Signal peptidase I W of Bacillus subtilis (strain 168).